A 662-amino-acid chain; its full sequence is Glutathione hydrolase 7 (662 aa).

The Cytoplasmic portion of the chain corresponds to 1-106 (MAAENEASQE…AAECSCRQDG (106 aa)). Serine 17, serine 72, serine 79, and serine 83 each carry phosphoserine. The tract at residues 26–90 (SFPRLPEDEP…DGSPLRETRK (65 aa)) is disordered. Residues 72-83 (SSSSEMGSQDGS) show a composition bias toward low complexity. The helical; Signal-anchor for type II membrane protein transmembrane segment at 107–127 (LTVIVTACLTFATGVTVALVM) threads the bilayer. Topologically, residues 128 to 662 (QIYFGDPQIF…SLDATGASIL (535 aa)) are extracellular. Residues asparagine 198, asparagine 267, asparagine 283, asparagine 330, asparagine 353, asparagine 394, asparagine 519, asparagine 523, and asparagine 586 are each glycosylated (N-linked (GlcNAc...) asparagine).

Belongs to the gamma-glutamyltransferase family. In terms of assembly, heterodimer composed of the light and heavy chains. The active site is located in the light chain. Post-translationally, cleaved by autocatalysis into a large and a small subunit and the autocatalytic cleavage is essential to the functional activation of the enzyme.

Its subcellular location is the membrane. The enzyme catalyses an N-terminal (5-L-glutamyl)-[peptide] + an alpha-amino acid = 5-L-glutamyl amino acid + an N-terminal L-alpha-aminoacyl-[peptide]. It carries out the reaction glutathione + H2O = L-cysteinylglycine + L-glutamate. It catalyses the reaction an S-substituted glutathione + H2O = an S-substituted L-cysteinylglycine + L-glutamate. Its pathway is sulfur metabolism; glutathione metabolism. In terms of biological role, hydrolyzes and transfers gamma-glutamyl moieties from glutathione and other gamma-glutamyl compounds to acceptors. In Rattus norvegicus (Rat), this protein is Glutathione hydrolase 7.